The primary structure comprises 364 residues: Peptide chain release factor 2 (364 aa).

Glutamine 251 carries the post-translational modification N5-methylglutamine.

It belongs to the prokaryotic/mitochondrial release factor family. Methylated by PrmC. Methylation increases the termination efficiency of RF2.

It localises to the cytoplasm. In terms of biological role, peptide chain release factor 2 directs the termination of translation in response to the peptide chain termination codons UGA and UAA. In Campylobacter hominis (strain ATCC BAA-381 / DSM 21671 / CCUG 45161 / LMG 19568 / NCTC 13146 / CH001A), this protein is Peptide chain release factor 2.